A 145-amino-acid polypeptide reads, in one-letter code: Basic phospholipase A2 PC17 (145 aa).

The first 21 residues, Met-1–Ala-21, serve as a signal peptide directing secretion. A propeptide spanning residues Ile-22–Arg-27 is cleaved from the precursor. Intrachain disulfides connect Cys-38/Cys-98, Cys-54/Cys-144, Cys-56/Cys-72, Cys-71/Cys-125, Cys-78/Cys-118, Cys-87/Cys-111, and Cys-105/Cys-116. Positions 55, 57, and 59 each coordinate Ca(2+). The active site involves His-75. Asp-76 contributes to the Ca(2+) binding site. Asp-119 is an active-site residue.

Belongs to the phospholipase A2 family. Group I subfamily. D49 sub-subfamily. It depends on Ca(2+) as a cofactor. As to expression, expressed by the venom gland.

The protein resides in the secreted. It carries out the reaction a 1,2-diacyl-sn-glycero-3-phosphocholine + H2O = a 1-acyl-sn-glycero-3-phosphocholine + a fatty acid + H(+). Functionally, snake venom phospholipase A2 (PLA2) that inhibits neuromuscular transmission by blocking acetylcholine release from the nerve termini. PLA2 catalyzes the calcium-dependent hydrolysis of the 2-acyl groups in 3-sn-phosphoglycerides. The sequence is that of Basic phospholipase A2 PC17 from Laticauda colubrina (Yellow-lipped sea krait).